The sequence spans 142 residues: MALSAEDRALVRALWKKLGSNVGVYTTEALERTFLAFPATKTYFSHLDLSPGSSQVRAHGQKVADALSLAVERLDDLPHALSALSHLHACQLRVDPASFQLLGHCLLVTLARHYPGDFSPALQASLDKFLSHVISALASEYR.

Residues 2 to 142 form the Globin domain; the sequence is ALSAEDRALV…VISALASEYR (141 aa). Heme b-binding residues include His-59 and His-88.

It belongs to the globin family.

The sequence is that of Hemoglobin subunit theta-1 (HBQ1) from Pongo pygmaeus (Bornean orangutan).